We begin with the raw amino-acid sequence, 295 residues long: 3-hydroxy-5-phosphonooxypentane-2,4-dione thiolase (295 aa).

K203 serves as the catalytic Schiff-base intermediate with substrate.

This sequence belongs to the DeoC/FbaB aldolase family. As to quaternary structure, homodecamer.

It is found in the cytoplasm. It carries out the reaction dihydroxyacetone phosphate + acetyl-CoA = 3-hydroxy-2,4-dioxopentyl phosphate + CoA. Functionally, involved in the degradation of phospho-AI-2, thereby terminating induction of the lsr operon and closing the AI-2 signaling cycle. Catalyzes the transfer of an acetyl moiety from 3-hydroxy-5-phosphonooxypentane-2,4-dione to CoA to form glycerone phosphate and acetyl-CoA. The polypeptide is 3-hydroxy-5-phosphonooxypentane-2,4-dione thiolase (Enterobacter sp. (strain 638)).